Reading from the N-terminus, the 510-residue chain is NAD(P)H-quinone oxidoreductase subunit 2 B, chloroplastic (510 aa).

A run of 13 helical transmembrane segments spans residues 24 to 44 (LLLF…GLIL), 57 to 77 (IPWL…ALLF), 99 to 119 (IFQF…VEYI), 124 to 144 (MAIT…MFLC), 150 to 170 (ITIF…SGYT), 183 to 203 (YLLM…WLYG), 227 to 247 (PGIS…LSPA), 295 to 315 (WHLL…LIAI), 323 to 343 (MLAY…IVGD), 347 to 367 (GYAS…GTFA), 395 to 415 (ALSS…AGFF), 418 to 438 (LHLF…IGLL), and 484 to 504 (MIVC…IIAI).

This sequence belongs to the complex I subunit 2 family. NDH is composed of at least 16 different subunits, 5 of which are encoded in the nucleus.

It is found in the plastid. Its subcellular location is the chloroplast thylakoid membrane. It carries out the reaction a plastoquinone + NADH + (n+1) H(+)(in) = a plastoquinol + NAD(+) + n H(+)(out). It catalyses the reaction a plastoquinone + NADPH + (n+1) H(+)(in) = a plastoquinol + NADP(+) + n H(+)(out). In terms of biological role, NDH shuttles electrons from NAD(P)H:plastoquinone, via FMN and iron-sulfur (Fe-S) centers, to quinones in the photosynthetic chain and possibly in a chloroplast respiratory chain. The immediate electron acceptor for the enzyme in this species is believed to be plastoquinone. Couples the redox reaction to proton translocation, and thus conserves the redox energy in a proton gradient. The polypeptide is NAD(P)H-quinone oxidoreductase subunit 2 B, chloroplastic (Chloranthus spicatus (Chulantree)).